Consider the following 163-residue polypeptide: Phosphopantetheine adenylyltransferase (163 aa).

Residue S11 coordinates substrate. ATP-binding positions include 11–12 (SF) and H19. K43, L75, and R89 together coordinate substrate. ATP is bound by residues 90–92 (GLR), E100, and 125–131 (FGYLSSS).

This sequence belongs to the bacterial CoaD family. As to quaternary structure, homohexamer. Mg(2+) serves as cofactor.

The protein localises to the cytoplasm. The catalysed reaction is (R)-4'-phosphopantetheine + ATP + H(+) = 3'-dephospho-CoA + diphosphate. Its pathway is cofactor biosynthesis; coenzyme A biosynthesis; CoA from (R)-pantothenate: step 4/5. Functionally, reversibly transfers an adenylyl group from ATP to 4'-phosphopantetheine, yielding dephospho-CoA (dPCoA) and pyrophosphate. In Geobacter metallireducens (strain ATCC 53774 / DSM 7210 / GS-15), this protein is Phosphopantetheine adenylyltransferase.